A 32-amino-acid polypeptide reads, in one-letter code: Cytochrome b6-f complex subunit 6 (32 aa).

The chain crosses the membrane as a helical span at residues isoleucine 4 to threonine 26.

Belongs to the PetL family. As to quaternary structure, the 4 large subunits of the cytochrome b6-f complex are cytochrome b6, subunit IV (17 kDa polypeptide, PetD), cytochrome f and the Rieske protein, while the 4 small subunits are PetG, PetL, PetM and PetN. The complex functions as a dimer.

It localises to the plastid. It is found in the chloroplast thylakoid membrane. Functionally, component of the cytochrome b6-f complex, which mediates electron transfer between photosystem II (PSII) and photosystem I (PSI), cyclic electron flow around PSI, and state transitions. PetL is important for photoautotrophic growth as well as for electron transfer efficiency and stability of the cytochrome b6-f complex. In Tetradesmus obliquus (Green alga), this protein is Cytochrome b6-f complex subunit 6.